Consider the following 89-residue polypeptide: Small ribosomal subunit protein uS15 (89 aa).

It belongs to the universal ribosomal protein uS15 family. Part of the 30S ribosomal subunit. Forms a bridge to the 50S subunit in the 70S ribosome, contacting the 23S rRNA.

One of the primary rRNA binding proteins, it binds directly to 16S rRNA where it helps nucleate assembly of the platform of the 30S subunit by binding and bridging several RNA helices of the 16S rRNA. Functionally, forms an intersubunit bridge (bridge B4) with the 23S rRNA of the 50S subunit in the ribosome. The protein is Small ribosomal subunit protein uS15 of Cereibacter sphaeroides (strain ATCC 17023 / DSM 158 / JCM 6121 / CCUG 31486 / LMG 2827 / NBRC 12203 / NCIMB 8253 / ATH 2.4.1.) (Rhodobacter sphaeroides).